Consider the following 305-residue polypeptide: Probable 2-methylisocitrate lyase 1 (305 aa).

52 to 54 (SGA) contributes to the substrate binding site. Asp91 and Asp93 together coordinate Mg(2+). Substrate-binding positions include 128–129 (CG), Arg163, Glu193, 216–218 (NMT), Arg247, and Arg276.

Belongs to the isocitrate lyase/PEP mutase superfamily. Methylisocitrate lyase family. Homotetramer; dimer of dimers. It depends on Mg(2+) as a cofactor.

The enzyme catalyses (2S,3R)-3-hydroxybutane-1,2,3-tricarboxylate = pyruvate + succinate. Functionally, catalyzes the thermodynamically favored C-C bond cleavage of (2R,3S)-2-methylisocitrate to yield pyruvate and succinate via an alpha-carboxy-carbanion intermediate. The sequence is that of Probable 2-methylisocitrate lyase 1 from Corynebacterium glutamicum (strain ATCC 13032 / DSM 20300 / JCM 1318 / BCRC 11384 / CCUG 27702 / LMG 3730 / NBRC 12168 / NCIMB 10025 / NRRL B-2784 / 534).